The chain runs to 110 residues: Nucleoid-associated protein PsycPRwf_1729 (110 aa).

Belongs to the YbaB/EbfC family. As to quaternary structure, homodimer.

Its subcellular location is the cytoplasm. It localises to the nucleoid. Functionally, binds to DNA and alters its conformation. May be involved in regulation of gene expression, nucleoid organization and DNA protection. The sequence is that of Nucleoid-associated protein PsycPRwf_1729 from Psychrobacter sp. (strain PRwf-1).